A 385-amino-acid polypeptide reads, in one-letter code: Putative UDP-N-acetylglucosamine 2-epimerase (385 aa).

Belongs to the UDP-N-acetylglucosamine 2-epimerase family.

The protein localises to the cytoplasm. The catalysed reaction is UDP-N-acetyl-alpha-D-glucosamine = UDP-N-acetyl-alpha-D-mannosamine. The polypeptide is Putative UDP-N-acetylglucosamine 2-epimerase (Clostridium acetobutylicum (strain ATCC 824 / DSM 792 / JCM 1419 / IAM 19013 / LMG 5710 / NBRC 13948 / NRRL B-527 / VKM B-1787 / 2291 / W)).